The following is a 316-amino-acid chain: uncharacterized protein (316 aa).

Disordered stretches follow at residues 82 to 105 and 238 to 257; these read AMAA…SGGN and ASVS…DTQE. 2 stretches are compositionally biased toward low complexity: residues 84–96 and 239–255; these read AAAS…SSGT and SVSV…STDT.

It belongs to the MG307/MG309/MG338 family.

This is an uncharacterized protein from Mycoplasma pneumoniae (strain ATCC 29342 / M129 / Subtype 1) (Mycoplasmoides pneumoniae).